Reading from the N-terminus, the 407-residue chain is Probable tRNA sulfurtransferase (407 aa).

Residues 61-165 (EEMCNRLKKV…LDAIYMYDQV (105 aa)) form the THUMP domain. ATP contacts are provided by residues 183–184 (ML), 208–209 (HF), Arg-265, Gly-287, and Gln-296.

Belongs to the ThiI family.

Its subcellular location is the cytoplasm. It carries out the reaction [ThiI sulfur-carrier protein]-S-sulfanyl-L-cysteine + a uridine in tRNA + 2 reduced [2Fe-2S]-[ferredoxin] + ATP + H(+) = [ThiI sulfur-carrier protein]-L-cysteine + a 4-thiouridine in tRNA + 2 oxidized [2Fe-2S]-[ferredoxin] + AMP + diphosphate. The catalysed reaction is [ThiS sulfur-carrier protein]-C-terminal Gly-Gly-AMP + S-sulfanyl-L-cysteinyl-[cysteine desulfurase] + AH2 = [ThiS sulfur-carrier protein]-C-terminal-Gly-aminoethanethioate + L-cysteinyl-[cysteine desulfurase] + A + AMP + 2 H(+). Its pathway is cofactor biosynthesis; thiamine diphosphate biosynthesis. In terms of biological role, catalyzes the ATP-dependent transfer of a sulfur to tRNA to produce 4-thiouridine in position 8 of tRNAs, which functions as a near-UV photosensor. Also catalyzes the transfer of sulfur to the sulfur carrier protein ThiS, forming ThiS-thiocarboxylate. This is a step in the synthesis of thiazole, in the thiamine biosynthesis pathway. The sulfur is donated as persulfide by IscS. The sequence is that of Probable tRNA sulfurtransferase from Staphylococcus saprophyticus subsp. saprophyticus (strain ATCC 15305 / DSM 20229 / NCIMB 8711 / NCTC 7292 / S-41).